A 299-amino-acid chain; its full sequence is ATP phosphoribosyltransferase (299 aa).

Belongs to the ATP phosphoribosyltransferase family. Long subfamily. As to quaternary structure, equilibrium between an active dimeric form, an inactive hexameric form and higher aggregates. Interconversion between the various forms is largely reversible and is influenced by the natural substrates and inhibitors of the enzyme. The cofactor is Mg(2+).

Its subcellular location is the cytoplasm. It catalyses the reaction 1-(5-phospho-beta-D-ribosyl)-ATP + diphosphate = 5-phospho-alpha-D-ribose 1-diphosphate + ATP. It functions in the pathway amino-acid biosynthesis; L-histidine biosynthesis; L-histidine from 5-phospho-alpha-D-ribose 1-diphosphate: step 1/9. Its activity is regulated as follows. Feedback inhibited by histidine. Catalyzes the condensation of ATP and 5-phosphoribose 1-diphosphate to form N'-(5'-phosphoribosyl)-ATP (PR-ATP). Has a crucial role in the pathway because the rate of histidine biosynthesis seems to be controlled primarily by regulation of HisG enzymatic activity. This chain is ATP phosphoribosyltransferase, found in Escherichia coli O17:K52:H18 (strain UMN026 / ExPEC).